The primary structure comprises 361 residues: S-adenosylmethionine decarboxylase proenzyme (361 aa).

Catalysis depends on residues E13 and E16. S73 functions as the Schiff-base intermediate with substrate; via pyruvic acid in the catalytic mechanism. A Pyruvic acid (Ser); by autocatalysis modification is found at S73. Catalysis depends on C87, which acts as the Proton donor; for catalytic activity. Catalysis depends on proton acceptor; for processing activity residues S236 and H249.

It belongs to the eukaryotic AdoMetDC family. It depends on pyruvate as a cofactor. In terms of processing, is synthesized initially as an inactive proenzyme. Formation of the active enzyme involves a self-maturation process in which the active site pyruvoyl group is generated from an internal serine residue via an autocatalytic post-translational modification. Two non-identical subunits are generated from the proenzyme in this reaction, and the pyruvate is formed at the N-terminus of the alpha chain, which is derived from the carboxyl end of the proenzyme. The post-translation cleavage follows an unusual pathway, termed non-hydrolytic serinolysis, in which the side chain hydroxyl group of the serine supplies its oxygen atom to form the C-terminus of the beta chain, while the remainder of the serine residue undergoes an oxidative deamination to produce ammonia and the pyruvoyl group blocking the N-terminus of the alpha chain.

It carries out the reaction S-adenosyl-L-methionine + H(+) = S-adenosyl 3-(methylsulfanyl)propylamine + CO2. It participates in amine and polyamine biosynthesis; S-adenosylmethioninamine biosynthesis; S-adenosylmethioninamine from S-adenosyl-L-methionine: step 1/1. The protein is S-adenosylmethionine decarboxylase proenzyme (SAMDC) of Nicotiana tabacum (Common tobacco).